Reading from the N-terminus, the 160-residue chain is Protein-export protein SecB (160 aa).

It belongs to the SecB family. As to quaternary structure, homotetramer, a dimer of dimers. One homotetramer interacts with 1 SecA dimer.

It localises to the cytoplasm. One of the proteins required for the normal export of preproteins out of the cell cytoplasm. It is a molecular chaperone that binds to a subset of precursor proteins, maintaining them in a translocation-competent state. It also specifically binds to its receptor SecA. The polypeptide is Protein-export protein SecB (Burkholderia lata (strain ATCC 17760 / DSM 23089 / LMG 22485 / NCIMB 9086 / R18194 / 383)).